The following is a 784-amino-acid chain: DNA ligase (784 aa).

Residues 31–35 (DAEYD), 80–81 (SL), and Glu120 each bind NAD(+). Catalysis depends on Lys122, which acts as the N6-AMP-lysine intermediate. NAD(+) contacts are provided by Arg143, Glu180, Lys296, and Lys320. Zn(2+) is bound by residues Cys414, Cys417, Cys444, and Cys450. A BRCT domain is found at 701–784 (AEGLPLAGQT…AFMAEQGITL (84 aa)).

It belongs to the NAD-dependent DNA ligase family. LigA subfamily. Mg(2+) serves as cofactor. The cofactor is Mn(2+).

It catalyses the reaction NAD(+) + (deoxyribonucleotide)n-3'-hydroxyl + 5'-phospho-(deoxyribonucleotide)m = (deoxyribonucleotide)n+m + AMP + beta-nicotinamide D-nucleotide.. Functionally, DNA ligase that catalyzes the formation of phosphodiester linkages between 5'-phosphoryl and 3'-hydroxyl groups in double-stranded DNA using NAD as a coenzyme and as the energy source for the reaction. It is essential for DNA replication and repair of damaged DNA. This is DNA ligase from Pseudomonas entomophila (strain L48).